The primary structure comprises 771 residues: Kinase suppressor of Ras A (771 aa).

Residues 152-169 (SRTSSGSTDEPSGQSTPA) are compositionally biased toward polar residues. Residues 152 to 172 (SRTSSGSTDEPSGQSTPAIVT) form a disordered region. The Phorbol-ester/DAG-type zinc-finger motif lies at 215-269 (PHKWHRSTKFRFSGDAVCHFCQRPLGFGFLNAWEKCRSCKWKVHTQCKGRVGDSC). 2 disordered regions span residues 290–339 (GMWK…ISGN) and 414–433 (DSTGSQEVDSEAAPSQEAVD). Positions 318-331 (SSSSTNSSAPSTPA) are enriched in low complexity. Residues 477–748 (DKQAPIIGRG…TDINLKLTAL (272 aa)) enclose the Protein kinase domain. Residues 483 to 491 (IGRGRFGKV) and K503 contribute to the ATP site. D600 acts as the Proton acceptor in catalysis.

It belongs to the protein kinase superfamily. TKL Ser/Thr protein kinase family. As to quaternary structure, interacts with mek-2. It depends on Mg(2+) as a cofactor.

The catalysed reaction is L-seryl-[protein] + ATP = O-phospho-L-seryl-[protein] + ADP + H(+). It catalyses the reaction L-threonyl-[protein] + ATP = O-phospho-L-threonyl-[protein] + ADP + H(+). Its function is as follows. Serine/threonine-protein kinase which positively regulates Ras-mediated signaling probably acting at the level of let-60/ras or/and lin-45/raf. Involved in sex myoblast migration. Plays a role in responses to M.nematophilum-mediated bacterial infection by promoting tail swelling and preventing constipation. Functions redundantly with ksr-2 in the Ras-mediated regulation of larval survival, the development of excretory canal and in mpk-1 phosphorylation in somatic cells. In addition, involved in determining vulval precursor cell fate during vulval induction independently of its kinase activity. Plays a role in egg-laying. The sequence is that of Kinase suppressor of Ras A from Caenorhabditis elegans.